Reading from the N-terminus, the 143-residue chain is Fido domain-containing protein DDB_G0283145 (143 aa).

Residues M1–N128 form the Fido domain. A helical transmembrane segment spans residues S49–I69.

The protein localises to the membrane. The chain is Fido domain-containing protein DDB_G0283145 from Dictyostelium discoideum (Social amoeba).